The primary structure comprises 65 residues: uncharacterized protein (65 aa).

The protein resides in the plastid. The protein localises to the chloroplast. This is an uncharacterized protein from Guillardia theta (Cryptophyte).